The chain runs to 303 residues: Protoheme IX farnesyltransferase 2 (303 aa).

The next 9 membrane-spanning stretches (helical) occupy residues 29 to 49 (VVAL…PGIV), 51 to 71 (LQPL…AAAF), 96 to 118 (ISTT…VLYT), 123 to 143 (LTAW…TAYL), 150 to 170 (NIVI…TAIT), 177 to 197 (ALLL…ALAI), 223 to 243 (CILL…LVGM), 244 to 264 (CGPI…YKAW), and 281 to 301 (FSIY…YFWV).

Belongs to the UbiA prenyltransferase family. Protoheme IX farnesyltransferase subfamily.

It is found in the cell inner membrane. It carries out the reaction heme b + (2E,6E)-farnesyl diphosphate + H2O = Fe(II)-heme o + diphosphate. It functions in the pathway porphyrin-containing compound metabolism; heme O biosynthesis; heme O from protoheme: step 1/1. Its function is as follows. Converts heme B (protoheme IX) to heme O by substitution of the vinyl group on carbon 2 of heme B porphyrin ring with a hydroxyethyl farnesyl side group. The chain is Protoheme IX farnesyltransferase 2 from Shewanella frigidimarina (strain NCIMB 400).